A 479-amino-acid chain; its full sequence is Cobyric acid synthase (479 aa).

The 193-residue stretch at Thr250–Ala442 folds into the GATase cobBQ-type domain. The active-site Nucleophile is the Cys331. His434 is a catalytic residue.

Belongs to the CobB/CobQ family. CobQ subfamily.

The protein operates within cofactor biosynthesis; adenosylcobalamin biosynthesis. Its function is as follows. Catalyzes amidations at positions B, D, E, and G on adenosylcobyrinic A,C-diamide. NH(2) groups are provided by glutamine, and one molecule of ATP is hydrogenolyzed for each amidation. The sequence is that of Cobyric acid synthase from Variovorax paradoxus (strain S110).